A 1121-amino-acid polypeptide reads, in one-letter code: MAAATVGRDTLPEHWSYGVCRDGRVFFINDQLRCTTWLHPRTGEPVNSGHMIRSDLPRGWEEGFTEEGASYFIDHNQQTTAFRHPVTGQFSPENSEFILQEEPNPHMSKQDRNQRPSSMVSETSTAGTASTLEAKPGPKIIKSSSKVHSFGKRDQAIRRNPNVPVVVRGWLHKQDSSGMRLWKRRWFVLADYCLFYYKDSREEAVLGSIPLPSYVISPVAPEDRISRKYSFKAVHTGMRALIYNSSTAGSQAEQSGMRTYYFSADTQEDMNAWVRAMNQAAQVLSRSSLKRDMEKVERQAVPQANHTESCHECGRVGPGHTRDCPHRGHDDIVNFERQEQEGEQYRSQRDPLEGKRDRSKARSPYSPAEEDALFMDLPTGPRGQQAQPQRAEKNGMLPASYGPGEQNGTGGYQRAFPPRTNPEKHSQRKSNLAQVEHWARAQKGDSRSLPLDQTLPRQGPGQSLSFPENYQTLPKSTRHPSGGSSPPPRNLPSDYKYAQDRASHLKMSSEERRAHRDGTVWQLYEWQQRQQFRHGSPTAPICLGSPEFTDQGRSRSMLEVPRSISVPPSPSDIPPPGPPRVFPPRRPHTPAERVTVKPPDQRRSVDISLGDSPRRARGHAVKNSSHVDRRSMPSMGYMTHTVSAPSLHGKSADDTYLQLKKDLEYLDLKMTGRDLLKDRSLKPVKIAESDTDVKLSIFCEQDRVLQDLEDKIRALKENKDQLESVLEVLHRQMEQYRDQPQHLEKIAYQQKLLQEDLVHIRAELSRESTEMENAWNEYLKLENDVEQLKQTLQEQHRRAFFFQEKSQIQKDLWRIEDVTAGLSANKENFRILVESVKNPERKTVPLFPHPPVPSLSTSESKPPPQPSPPTSPVRTPLEVRLFPQLQTYVPYRPHPPQLRKVTSPLQSPTKAKPKVEDEAPPRPPLPELYSPEDQPPAVPPLPREATIIRHTSVRGLKRQSDERKRDRELGQCVNGDSRVELRSYVSEPELATLSGDMAQPSLGLVGPESRYQTLPGRGLSGSTSRLQQSSTIAPYVTLRRGLNAESSKATFPRPKSALERLYSGDHQRGKMSAEEQLERMKRHQKALVRERKRTLGQGERTGLPSSRYLSRPLPGDLGSVC.

WW domains lie at 9-42 (DTLPEHWSYGVCRDGRVFFINDQLRCTTWLHPRT) and 54-87 (SDLPRGWEEGFTEEGASYFIDHNQQTTAFRHPVT). The interval 105–137 (PHMSKQDRNQRPSSMVSETSTAGTASTLEAKPG) is disordered. The segment covering 115 to 131 (RPSSMVSETSTAGTAST) has biased composition (polar residues). The 119-residue stretch at 164-282 (PVVVRGWLHK…WVRAMNQAAQ (119 aa)) folds into the PH domain. The tract at residues 299–514 (QAVPQANHTE…LKMSSEERRA (216 aa)) is disordered. Composition is skewed to basic and acidic residues over residues 308–356 (ESCH…EGKR) and 437–446 (HWARAQKGDS). Residues 460-475 (PGQSLSFPENYQTLPK) are compositionally biased toward polar residues. A compositionally biased stretch (basic and acidic residues) spans 497 to 514 (YAQDRASHLKMSSEERRA). Residues serine 536, serine 545, serine 569, serine 604, serine 608, and serine 612 each carry the phosphoserine modification. Residues 538–696 (TAPICLGSPE…AESDTDVKLS (159 aa)) are interaction with CTNND1. Residues 547–632 (EFTDQGRSRS…NSSHVDRRSM (86 aa)) form a disordered region. Over residues 567–582 (PPSPSDIPPPGPPRVF) the composition is skewed to pro residues. The segment covering 589-605 (TPAERVTVKPPDQRRSV) has biased composition (basic and acidic residues). Residues 700–801 (EQDRVLQDLE…LQEQHRRAFF (102 aa)) adopt a coiled-coil conformation. 2 disordered regions span residues 841–876 (RKTVPLFPHPPVPSLSTSESKPPPQPSPPTSPVRTP) and 888–971 (YVPY…ELGQ). Phosphoserine occurs at positions 858, 860, and 867. A compositionally biased stretch (pro residues) spans 861-871 (KPPPQPSPPTS). Threonine 870 bears the Phosphothreonine mark. 3 positions are modified to phosphoserine: serine 871, serine 903, and serine 907. Over residues 933–942 (DQPPAVPPLP) the composition is skewed to pro residues. A compositionally biased stretch (basic and acidic residues) spans 958–969 (RQSDERKRDREL). Serine 986 is modified (phosphoserine). Disordered stretches follow at residues 1003 to 1028 (GLVGPESRYQTLPGRGLSGSTSRLQQ) and 1082 to 1121 (RHQKALVRERKRTLGQGERTGLPSSRYLSRPLPGDLGSVC). A coiled-coil region spans residues 1067–1094 (QRGKMSAEEQLERMKRHQKALVRERKRT). The span at 1082–1094 (RHQKALVRERKRT) shows a compositional bias: basic residues.

As to quaternary structure, interacts with CAMSAP3 and CTNND1. Interacts (via WW domains) with TSPAN33 (via cytoplasmic domain) and with PDZD11; the interaction with TSPAN33 is dependent on PDZD11 being bound to PLEKHA7 and facilitates the docking of ADAM10 to zonula adherens through interaction of TSPAN33 with ADAM10.

The protein resides in the cell junction. It localises to the adherens junction. The protein localises to the cytoplasm. Its subcellular location is the cytoskeleton. It is found in the microtubule organizing center. The protein resides in the centrosome. Functionally, required for zonula adherens biogenesis and maintenance. Acts via its interaction with CAMSAP3, which anchors microtubules at their minus-ends to zonula adherens, leading to the recruitment of KIFC3 kinesin to the junctional site. Mediates docking of ADAM10 to zonula adherens through a PDZD11-dependent interaction with the ADAM10-binding protein TSPAN33. This is Pleckstrin homology domain-containing family A member 7 (PLEKHA7) from Homo sapiens (Human).